A 311-amino-acid chain; its full sequence is Methionyl-tRNA formyltransferase (311 aa).

110–113 (SLLP) provides a ligand contact to (6S)-5,6,7,8-tetrahydrofolate.

The protein belongs to the Fmt family.

The catalysed reaction is L-methionyl-tRNA(fMet) + (6R)-10-formyltetrahydrofolate = N-formyl-L-methionyl-tRNA(fMet) + (6S)-5,6,7,8-tetrahydrofolate + H(+). Its function is as follows. Attaches a formyl group to the free amino group of methionyl-tRNA(fMet). The formyl group appears to play a dual role in the initiator identity of N-formylmethionyl-tRNA by promoting its recognition by IF2 and preventing the misappropriation of this tRNA by the elongation apparatus. The polypeptide is Methionyl-tRNA formyltransferase (Streptococcus pneumoniae serotype 2 (strain D39 / NCTC 7466)).